We begin with the raw amino-acid sequence, 111 residues long: UPF0060 membrane protein xcc-b100_1273 (111 aa).

Helical transmembrane passes span 8-28 (LLLF…PYLW), 34-54 (SVWL…LLTL), 62-82 (VYAA…WWVD), and 91-111 (LLGA…PRSG).

The protein belongs to the UPF0060 family.

It localises to the cell inner membrane. In Xanthomonas campestris pv. campestris (strain B100), this protein is UPF0060 membrane protein xcc-b100_1273.